The primary structure comprises 44 residues: uncharacterized protein (44 aa).

Residues 1–28 (MLRDLGRRVAIAAILSGIILGGMSISLA) form the signal peptide.

This is an uncharacterized protein from Bacillus subtilis (strain 168).